Consider the following 902-residue polypeptide: Desmocollin-2 (902 aa).

Positions 1–27 (MAAVGSMRSGSPAFGLGHLLTLAILAL) are cleaved as a signal peptide. The propeptide occupies 28–135 (ASDACKEVVL…TEKVLSRAKR (108 aa)). Cadherin domains follow at residues 136 to 243 (RWAP…YPIF), 244 to 355 (TQKL…LPTF), 356 to 471 (TRTT…GPEC), 472 to 579 (IPPM…FIPK), and 580 to 694 (QTVV…RLGP). Residues 136–694 (RWAPIPCSML…TGYADVRLGP (559 aa)) lie on the Extracellular side of the membrane. N-linked (GlcNAc...) asparagine glycosylation is present at asparagine 166. Residues asparagine 392, asparagine 546, and asparagine 629 are each glycosylated (N-linked (GlcNAc...) asparagine). A helical membrane pass occupies residues 695 to 715 (WAILAILLGIALLFCILFTLV). Topologically, residues 716-902 (CSVSRASKQQ…RTLAEVCAKR (187 aa)) are cytoplasmic. Residues serine 865, serine 869, and serine 874 each carry the phosphoserine modification.

As to quaternary structure, interacts with DSP, PKP2 and JUP. Interacts with DSG3; the interaction may limit the interaction of DSC3 with p38MAPK family members and therefore repress p38MAPK signaling activation. Expressed in intestinal epithelial cells (at protein level). Expressed in the heart. Expressed in tongue, bladder, stomach, liver, kidney, and lung.

The protein resides in the cell membrane. It is found in the cell junction. The protein localises to the desmosome. In terms of biological role, a component of desmosome cell-cell junctions which are required for positive regulation of cellular adhesion. Promotes timely incorporation of DSG2 into desmosome intercellular junctions and promotes interaction of desmosome cell junctions with intermediate filament cytokeratin, via modulation of DSP phosphorylation. Plays an important role in desmosome-mediated maintenance of intestinal epithelial cell intercellular adhesion strength and barrier function. Positively regulates wound healing of intestinal mucosa via promotion of epithelial cell migration, and also plays a role in mechanotransduction of force between intestinal epithelial cells and extracellular matrix. May contribute to epidermal cell positioning (stratification) by mediating differential adhesiveness between cells that express different isoforms. May promote p38MAPK signaling activation that facilitates keratinocyte migration. This chain is Desmocollin-2 (Dsc2), found in Mus musculus (Mouse).